The primary structure comprises 221 residues: Small ribosomal subunit protein uS3c (221 aa).

One can recognise a KH type-2 domain in the interval 39–109 (LRDYLKTRLA…RVIVHVVEIA (71 aa)).

It belongs to the universal ribosomal protein uS3 family. As to quaternary structure, part of the 30S ribosomal subunit.

The protein localises to the plastid. It is found in the chloroplast. This is Small ribosomal subunit protein uS3c (rps3) from Nephroselmis olivacea (Green alga).